The sequence spans 104 residues: Replication restart protein PriB (104 aa).

The SSB domain occupies 2–101 (TNRLVLSGTV…LHAEQIELID (100 aa)). Cysteines 48 and 80 form a disulfide. The L45 loop signature appears at 82–89 (KAKNGLSK).

Belongs to the PriB family. In terms of assembly, homodimer. Primosome assembly occurs via a 'hand-off' mechanism. PriA binds to replication forks, subsequently PriB then DnaT bind; DnaT then displaces ssDNA to generate the helicase loading substrate, which allows DnaC to load helicase DnaB onto the fork. ssDNA is displaced from the PriB-ssDNA complex by DnaT. In a PriA-PriB-replication fork structure, movement of the PriA CRR domain exposes a surface to which PriB binds and contacts ssDNA emerging from the PriA pore. Binds PriA; binding is improved in the presence of ssDNA. Weakly binds DnaT; binding is improved in the presence of ssDNA; as DnaT levels increase PriB dissociates from ssDNA. Component of the replication restart primosome, which is composed of PriA, PriB, PriC, DnaB and DnaT; DnaG primase associates transiently with this complex. Component of the preprimosomal complex composed of one monomer of PriC and DnaT, two monomers of PriA, two dimers of PriB and one hexamer of DnaB. An intersubunit disulfide bond is seen in some crystals.

Its function is as follows. Involved in the restart of stalled replication forks, which reloads the replicative helicase (DnaB) on sites other than the origin of replication; the PriA-PriB pathway is the major replication restart pathway. There are several restart pathways, the PriA-PriB pathway is subdivided into 2 distinct pathways. priB and priC have redundant roles in the cell. During primosome assembly it facilitates complex formation between PriA and DnaT on DNA; stabilizes PriA on DNA, presumably by preventing or inhibiting PriA DNA translocation activity. Forms a branched DNA-PriA-PriB complex when the lagging strand is single-stranded (ss)DNA. Binds ssDNA in the presence and absence of ssDNA DNA-binding protein (SSB), does not bind branched structures. DNA binding, forming spiral filaments on ssDNA, is cooperative. Stimulates the helicase activity of PriA. The homodimer binds 12 nucleotides of ssDNA. Binds homo-pyrimidine tracts better than homo-purine tracts. Genetic interactions among priB, dam, lexA, nagC, polA, rdgB, rdgB, rep and uup link the PriA-PriB replication restart pathway to DNA double-strand break repair. The polypeptide is Replication restart protein PriB (Escherichia coli (strain K12)).